We begin with the raw amino-acid sequence, 356 residues long: S-adenosylmethionine:tRNA ribosyltransferase-isomerase (356 aa).

It belongs to the QueA family. Monomer.

It is found in the cytoplasm. It catalyses the reaction 7-aminomethyl-7-carbaguanosine(34) in tRNA + S-adenosyl-L-methionine = epoxyqueuosine(34) in tRNA + adenine + L-methionine + 2 H(+). It functions in the pathway tRNA modification; tRNA-queuosine biosynthesis. Transfers and isomerizes the ribose moiety from AdoMet to the 7-aminomethyl group of 7-deazaguanine (preQ1-tRNA) to give epoxyqueuosine (oQ-tRNA). The chain is S-adenosylmethionine:tRNA ribosyltransferase-isomerase from Enterobacter sp. (strain 638).